The following is a 203-amino-acid chain: Urease accessory protein UreG (203 aa).

14–21 contributes to the GTP binding site; that stretch reads GPVGAGKT.

Belongs to the SIMIBI class G3E GTPase family. UreG subfamily. In terms of assembly, homodimer. UreD, UreF and UreG form a complex that acts as a GTP-hydrolysis-dependent molecular chaperone, activating the urease apoprotein by helping to assemble the nickel containing metallocenter of UreC. The UreE protein probably delivers the nickel.

It is found in the cytoplasm. Functionally, facilitates the functional incorporation of the urease nickel metallocenter. This process requires GTP hydrolysis, probably effectuated by UreG. In Jannaschia sp. (strain CCS1), this protein is Urease accessory protein UreG.